The chain runs to 326 residues: tRNA-modifying protein YgfZ (326 aa).

Positions 27 and 189 each coordinate folate.

Belongs to the tRNA-modifying YgfZ family.

The protein resides in the cytoplasm. In terms of biological role, folate-binding protein involved in regulating the level of ATP-DnaA and in the modification of some tRNAs. It is probably a key factor in regulatory networks that act via tRNA modification, such as initiation of chromosomal replication. The protein is tRNA-modifying protein YgfZ of Escherichia coli O157:H7 (strain EC4115 / EHEC).